The chain runs to 387 residues: 3-ketoacyl-CoA thiolase (387 aa).

Catalysis depends on C91, which acts as the Acyl-thioester intermediate. Catalysis depends on proton acceptor residues H343 and C373.

Belongs to the thiolase-like superfamily. Thiolase family. As to quaternary structure, heterotetramer of two alpha chains (FadB) and two beta chains (FadA).

The protein resides in the cytoplasm. The enzyme catalyses an acyl-CoA + acetyl-CoA = a 3-oxoacyl-CoA + CoA. It participates in lipid metabolism; fatty acid beta-oxidation. Its function is as follows. Catalyzes the final step of fatty acid oxidation in which acetyl-CoA is released and the CoA ester of a fatty acid two carbons shorter is formed. The protein is 3-ketoacyl-CoA thiolase of Shigella sonnei (strain Ss046).